A 162-amino-acid polypeptide reads, in one-letter code: MQYVTPDLCDAYPDLVQVVEPLFSNFGGRDSFGGEIVTIKCFEDNSLVKDQVDVDGTGKVMVVDGGGSLRRALLGDMLAEKAARNGWEGLIIYGCVRDVDVLAQTELGVQALASHPMKTDKRGIGDLNVPVTFCGVTFRPGEYVYADNNGIIVSPEPLSMPQ.

Substrate contacts are provided by residues 75–78 and Arg-97; that span reads GDML. Residue Asp-98 participates in a divalent metal cation binding.

The protein belongs to the class II aldolase/RraA-like family. As to quaternary structure, homotrimer. It depends on a divalent metal cation as a cofactor.

The enzyme catalyses 4-hydroxy-4-methyl-2-oxoglutarate = 2 pyruvate. The catalysed reaction is oxaloacetate + H(+) = pyruvate + CO2. Its function is as follows. Catalyzes the aldol cleavage of 4-hydroxy-4-methyl-2-oxoglutarate (HMG) into 2 molecules of pyruvate. Also contains a secondary oxaloacetate (OAA) decarboxylase activity due to the common pyruvate enolate transition state formed following C-C bond cleavage in the retro-aldol and decarboxylation reactions. In Stutzerimonas stutzeri (strain A1501) (Pseudomonas stutzeri), this protein is Putative 4-hydroxy-4-methyl-2-oxoglutarate aldolase.